The primary structure comprises 398 residues: Diaminopropionate ammonia-lyase (398 aa).

Lys77 carries the post-translational modification N6-(pyridoxal phosphate)lysine.

It belongs to the diaminopropionate ammonia-lyase family. In terms of assembly, homodimer. Pyridoxal 5'-phosphate is required as a cofactor.

The enzyme catalyses (S)-2,3-diaminopropanoate + H2O + H(+) = pyruvate + 2 NH4(+). The catalysed reaction is (R)-2,3-diaminopropanoate + H2O + H(+) = pyruvate + 2 NH4(+). Its function is as follows. Catalyzes the alpha,beta-elimination reaction of both L- and D-alpha,beta-diaminopropionate (DAP) to form pyruvate and ammonia. The D-isomer of serine is degraded to pyruvate, though very poorly; other amino acids (L-serine, D- and L-threonine, D- and L-beta-Cl-alanine) are not substrates. The protein is Diaminopropionate ammonia-lyase (ygeX) of Escherichia coli O157:H7.